The primary structure comprises 432 residues: Short/branched chain specific acyl-CoA dehydrogenase, mitochondrial (432 aa).

Residues 1–33 constitute a mitochondrion transit peptide; the sequence is MERATVRLLRGGALLRRNFPSCLSSWKTPPHAL. At Lys-70 the chain carries N6-acetyllysine; alternate. At Lys-70 the chain carries N6-succinyllysine; alternate. FAD-binding positions include 174-183 and 207-209; these read ICISETGAGS and WIS. Ser-183 contributes to the substrate binding site. Ser-183 bears the Phosphoserine mark. Residues Tyr-229 and Tyr-283 each contribute to the substrate site. At Lys-284 the chain carries N6-acetyllysine; alternate. Lys-284 is subject to N6-succinyllysine; alternate. Residue 291-294 participates in substrate binding; that stretch reads NEGR. Residues Arg-319, Gln-330, and 387–391 contribute to the FAD site; that span reads EWMGG. Glu-414 (proton acceptor) is an active-site residue. 416-418 is a binding site for FAD; the sequence is TSN. Residue Lys-426 is modified to N6-acetyllysine.

Belongs to the acyl-CoA dehydrogenase family. In terms of assembly, homotetramer. Requires FAD as cofactor.

It is found in the mitochondrion matrix. The catalysed reaction is 2-methylbutanoyl-CoA + oxidized [electron-transfer flavoprotein] + H(+) = (2E)-2-methylbut-2-enoyl-CoA + reduced [electron-transfer flavoprotein]. It carries out the reaction (2S)-2-methylbutanoyl-CoA + oxidized [electron-transfer flavoprotein] + H(+) = (2E)-2-methylbut-2-enoyl-CoA + reduced [electron-transfer flavoprotein]. It catalyses the reaction (2R)-2-methylbutanoyl-CoA + oxidized [electron-transfer flavoprotein] + H(+) = ethylacryloyl-CoA + reduced [electron-transfer flavoprotein]. The enzyme catalyses butanoyl-CoA + oxidized [electron-transfer flavoprotein] + H(+) = (2E)-butenoyl-CoA + reduced [electron-transfer flavoprotein]. The catalysed reaction is 2-methylpropanoyl-CoA + oxidized [electron-transfer flavoprotein] + H(+) = 2-methylpropenoyl-CoA + reduced [electron-transfer flavoprotein]. It carries out the reaction hexanoyl-CoA + oxidized [electron-transfer flavoprotein] + H(+) = (2E)-hexenoyl-CoA + reduced [electron-transfer flavoprotein]. It catalyses the reaction valproyl-CoA + oxidized [electron-transfer flavoprotein] + H(+) = (2E)-2-propylpent-2-enoyl-CoA + reduced [electron-transfer flavoprotein]. The protein operates within lipid metabolism; mitochondrial fatty acid beta-oxidation. It participates in amino-acid degradation; L-isoleucine degradation. Short and branched chain specific acyl-CoA dehydrogenase that catalyzes the removal of one hydrogen from C-2 and C-3 of the fatty acyl-CoA thioester, resulting in the formation of trans-2-enoyl-CoA. Among the different mitochondrial acyl-CoA dehydrogenases, acts specifically on short and branched chain acyl-CoA derivatives such as (S)-2-methylbutyryl-CoA as well as short straight chain acyl-CoAs such as butyryl-CoA. Plays an important role in the metabolism of L-isoleucine by catalyzing the dehydrogenation of 2-methylbutyryl-CoA, one of the steps of the L-isoleucine catabolic pathway. Can also act on valproyl-CoA, a metabolite of the valproic acid drug. In Bos taurus (Bovine), this protein is Short/branched chain specific acyl-CoA dehydrogenase, mitochondrial (ACADSB).